We begin with the raw amino-acid sequence, 266 residues long: UPF0246 protein Pcryo_0542 (266 aa).

It belongs to the UPF0246 family.

This chain is UPF0246 protein Pcryo_0542, found in Psychrobacter cryohalolentis (strain ATCC BAA-1226 / DSM 17306 / VKM B-2378 / K5).